Consider the following 474-residue polypeptide: Protein Rv3254 (474 aa).

The propeptide occupies 1-4 (MTGR).

This chain is Protein Rv3254, found in Mycobacterium tuberculosis (strain ATCC 25618 / H37Rv).